Here is a 151-residue protein sequence, read N- to C-terminus: Phosphopantetheine adenylyltransferase (151 aa).

Substrate is bound at residue Thr-9. ATP is bound by residues 9-10 (TF) and His-17. Positions 41, 73, and 87 each coordinate substrate. Residues 88 to 90 (GIR), Glu-98, and 122 to 128 (LTSISST) contribute to the ATP site.

The protein belongs to the bacterial CoaD family. In terms of assembly, homohexamer. The cofactor is Mg(2+).

The protein resides in the cytoplasm. The catalysed reaction is (R)-4'-phosphopantetheine + ATP + H(+) = 3'-dephospho-CoA + diphosphate. Its pathway is cofactor biosynthesis; coenzyme A biosynthesis; CoA from (R)-pantothenate: step 4/5. Functionally, reversibly transfers an adenylyl group from ATP to 4'-phosphopantetheine, yielding dephospho-CoA (dPCoA) and pyrophosphate. This is Phosphopantetheine adenylyltransferase from Phocaeicola vulgatus (strain ATCC 8482 / DSM 1447 / JCM 5826 / CCUG 4940 / NBRC 14291 / NCTC 11154) (Bacteroides vulgatus).